Consider the following 125-residue polypeptide: Ribosome-binding factor A (125 aa).

Belongs to the RbfA family. Monomer. Binds 30S ribosomal subunits, but not 50S ribosomal subunits or 70S ribosomes.

It is found in the cytoplasm. Its function is as follows. One of several proteins that assist in the late maturation steps of the functional core of the 30S ribosomal subunit. Associates with free 30S ribosomal subunits (but not with 30S subunits that are part of 70S ribosomes or polysomes). Required for efficient processing of 16S rRNA. May interact with the 5'-terminal helix region of 16S rRNA. This Methylobacillus flagellatus (strain ATCC 51484 / DSM 6875 / VKM B-1610 / KT) protein is Ribosome-binding factor A.